The following is a 304-amino-acid chain: Coenzyme PQQ synthesis protein B (304 aa).

It belongs to the PqqB family.

It participates in cofactor biosynthesis; pyrroloquinoline quinone biosynthesis. May be involved in the transport of PQQ or its precursor to the periplasm. This chain is Coenzyme PQQ synthesis protein B, found in Gluconobacter oxydans (strain 621H) (Gluconobacter suboxydans).